The sequence spans 370 residues: Cyanuric acid amidohydrolase (370 aa).

The interval 1-106 (MRTTSVGVFK…TVFTRREVER (106 aa)) is RU A. Residues R54 and 85–86 (SG) each bind substrate. The interval 115–251 (RLSIGMAHTR…NVVIVLGNSA (137 aa)) is RU B. Residue K165 is part of the active site. Residues R197 and 234-235 (SA) each bind substrate. Catalysis depends on S234, which acts as the Nucleophile. Residues 257-370 (FEIGHAVMND…PVAVIARLSD (114 aa)) are RU C. E302 is a binding site for Mg(2+). Substrate-binding positions include R329 and 348–349 (SG). Positions 351, 354, 355, 356, and 359 each coordinate Mg(2+).

It belongs to the cyclic amide hydrolase (CyAH) family. In terms of assembly, homotetramer.

It carries out the reaction cyanurate + H2O = 1-carboxybiuret + H(+). It functions in the pathway xenobiotic degradation; atrazine degradation; biuret from cyanurate: step 1/1. Inhibited by barbituric acid. In terms of biological role, responsible for the hydrolysis of cyanuric acid, an intermediate formed during catabolism of s-triazine based compounds in herbicides such as atrazine and polymers such as melamine. Catalyzes the hydrolytic opening of the s-triazine ring of cyanuric acid (2,4,6-trihydroxy-s-triazine) to yield carbon dioxide and carboxybiuret, which spontaneously decarboxylates to biuret. This is Cyanuric acid amidohydrolase from Bradyrhizobium diazoefficiens (strain JCM 10833 / BCRC 13528 / IAM 13628 / NBRC 14792 / USDA 110).